The following is a 391-amino-acid chain: uncharacterized protein (391 aa).

This is an uncharacterized protein from Sinorhizobium fredii (strain NBRC 101917 / NGR234).